Consider the following 253-residue polypeptide: CTP:phosphoglutamine cytidylyltransferase (253 aa).

It carries out the reaction N(5)-phospho-L-glutamine + CTP + H(+) = N(5)-(cytidine 5'-diphosphoramidyl)-L-glutamine + diphosphate. It participates in capsule biogenesis; capsule polysaccharide biosynthesis. In terms of biological role, involved in the biosynthesis of the O-methyl phosphoramidate (MeOPN) group found on the capsular polysaccharide (CPS) of C.jejuni. Catalyzes the formation of CDP-L-glutamine from CTP and L-glutamine phosphate. In the presence of MnCTP, catalyzes the displacement of pyrophosphate from CTP using phosphoramidate, methyl phosphate, methyl phosphonate, phosphate, arsenate, ethanolamine phosphate, (R/S)-glycerol-1-phosphate, glycerol-2-phosphate, serinol phosphate, L-serine phosphate and 3-phospho-D-glycerate as substrate in addition to L-glutamine phosphate. This Campylobacter jejuni subsp. jejuni serotype O:2 (strain ATCC 700819 / NCTC 11168) protein is CTP:phosphoglutamine cytidylyltransferase.